The following is a 230-amino-acid chain: RING finger protein 141 (230 aa).

The RING-type zinc-finger motif lies at 154–191 (ECCICMDGRVDLILPCAHSFCQKCIDKWSDRHRSCPVC).

This is RING finger protein 141 (RNF141) from Gallus gallus (Chicken).